A 315-amino-acid chain; its full sequence is Aspartate carbamoyltransferase catalytic subunit (315 aa).

Carbamoyl phosphate-binding residues include R65 and T66. K93 serves as a coordination point for L-aspartate. Carbamoyl phosphate is bound by residues R115, H145, and Q148. The L-aspartate site is built by R179 and R234. Positions 275 and 276 each coordinate carbamoyl phosphate.

This sequence belongs to the aspartate/ornithine carbamoyltransferase superfamily. ATCase family. Heterododecamer (2C3:3R2) of six catalytic PyrB chains organized as two trimers (C3), and six regulatory PyrI chains organized as three dimers (R2).

The catalysed reaction is carbamoyl phosphate + L-aspartate = N-carbamoyl-L-aspartate + phosphate + H(+). It functions in the pathway pyrimidine metabolism; UMP biosynthesis via de novo pathway; (S)-dihydroorotate from bicarbonate: step 2/3. Functionally, catalyzes the condensation of carbamoyl phosphate and aspartate to form carbamoyl aspartate and inorganic phosphate, the committed step in the de novo pyrimidine nucleotide biosynthesis pathway. This is Aspartate carbamoyltransferase catalytic subunit from Xanthomonas campestris pv. campestris (strain 8004).